The following is a 362-amino-acid chain: Dihydroorotate dehydrogenase (quinone) (362 aa).

Residues 62-66 and T86 each bind FMN; that span reads AGYDK. Substrate is bound at residue K66. Position 111–115 (111–115) interacts with substrate; sequence NRLGF. 2 residues coordinate FMN: N139 and N170. N170 is a binding site for substrate. The active-site Nucleophile is the S173. Position 175 (N175) interacts with substrate. K215 and S243 together coordinate FMN. 244-245 is a binding site for substrate; the sequence is NT. FMN is bound by residues G266, G295, and 316-317; that span reads YS.

Belongs to the dihydroorotate dehydrogenase family. Type 2 subfamily. Monomer. The cofactor is FMN.

The protein localises to the cell membrane. It carries out the reaction (S)-dihydroorotate + a quinone = orotate + a quinol. It participates in pyrimidine metabolism; UMP biosynthesis via de novo pathway; orotate from (S)-dihydroorotate (quinone route): step 1/1. Functionally, catalyzes the conversion of dihydroorotate to orotate with quinone as electron acceptor. This chain is Dihydroorotate dehydrogenase (quinone), found in Sinorhizobium medicae (strain WSM419) (Ensifer medicae).